Reading from the N-terminus, the 341-residue chain is Gibberellin 2-beta-dioxygenase 2 (341 aa).

One can recognise a Fe2OG dioxygenase domain in the interval 179-283 (KSDSCLRLNH…RISMIYFGGP (105 aa)). Fe cation contacts are provided by His-207, Asp-209, and His-264. Arg-274 is an active-site residue. Residue Arg-274 coordinates 2-oxoglutarate.

Belongs to the iron/ascorbate-dependent oxidoreductase family. GA2OX subfamily. It depends on Fe(2+) as a cofactor. Preferentially expressed in flowers, siliques, and upper stems. Expressed in cotyledons, at the base of the shoot apical meristem and developing leaf primordia.

The catalysed reaction is gibberellin A1 + 2-oxoglutarate + O2 = gibberellin A8 + succinate + CO2. The protein operates within plant hormone biosynthesis; gibberellin biosynthesis. In terms of biological role, catalyzes the 2-beta-hydroxylation of several biologically active gibberellins, leading to the homeostatic regulation of their endogenous level. Catabolism of gibberellins (GAs) plays a central role in plant development. Converts GA9/GA20 to GA51/GA29 and GA4/GA1 to GA34/GA8. The chain is Gibberellin 2-beta-dioxygenase 2 (GA2OX2) from Arabidopsis thaliana (Mouse-ear cress).